The following is a 1130-amino-acid chain: Sodium/potassium/calcium exchanger 1 (1130 aa).

Residues 1 to 419 (MGKLIRMGTQ…DLFSVEDRRQ (419 aa)) lie on the Extracellular side of the membrane. The interval 104-209 (PSIAMEDTPN…SPTATVRDRE (106 aa)) is disordered. Residues 125-136 (LKNSYSPTTAGT) show a composition bias toward polar residues. Positions 170-187 (PRGERKNSSPTHAREKGR) are enriched in basic and acidic residues. N-linked (GlcNAc...) asparagine glycans are attached at residues Asn176 and Asn273. The disordered stretch occupies residues 274 to 295 (ISTTPQGAVPQHTPATSEEQMT). Residues 286–295 (TPATSEEQMT) show a composition bias toward polar residues. Residues 420-440 (GWVVLHIFGMMYVFVALAIVC) traverse the membrane as a helical segment. Residues 441–464 (DEYFVPALGVITHKLQISEDVAGA) are Cytoplasmic-facing. The stretch at 461–501 (VAGATFMAAGGSAPELFTSLIGVFISHSNVGIGTIVGSAVF) is one Alpha-1 repeat. The chain crosses the membrane as a helical span at residues 465–485 (TFMAAGGSAPELFTSLIGVFI). At 486–489 (SHSN) the chain is on the extracellular side. The chain crosses the membrane as a helical span at residues 490-510 (VGIGTIVGSAVFNILFVIGTC). Over 511–530 (ALFSREILNLTWWPLFRDVS) the chain is Cytoplasmic. Residues 531 to 551 (FYILDLSMLIVFFLDSFIAWW) traverse the membrane as a helical segment. Position 552 (Glu552) is a topological domain, extracellular. The chain crosses the membrane as a helical span at residues 553 to 573 (SLLLLLAYALYVFTMKWNKQI). Residues 574-938 (ELWVKEQLSR…SLEWPDSRQK (365 aa)) lie on the Cytoplasmic side of the membrane. Residues 598-619 (PSEDAVEENEQQDSKKLKLPSV) are disordered. Ser625 is modified (phosphoserine). The interval 650 to 932 (GEARPSKDKQ…ENEEPLSLEW (283 aa)) is disordered. The span at 661-675 (SLNQEARVLSQTKAE) shows a compositional bias: polar residues. A Phosphothreonine modification is found at Thr690. The span at 703–715 (QEDDPGCQEDVDE) shows a compositional bias: acidic residues. The segment covering 730–751 (ETETEGKKDEQEGETEAERKED) has biased composition (basic and acidic residues). Acidic residues-rich tracts occupy residues 766–782 (GETEAEGKEDEQEGETE) and 802–820 (QEGETEAEGKEDEQEGETE). Residues 833–855 (AESKEVEQERETEAEGKDKHEGQ) are compositionally biased toward basic and acidic residues. Composition is skewed to acidic residues over residues 870–880 (GETEANAEDQC) and 896–928 (DGGDSEEEEDEEDEEEEEEEDEEEEEEENEEPL). Residues 939-959 (QAIYLFLLPIVFPLWLTIPDV) traverse the membrane as a helical segment. The Extracellular segment spans residues 960-966 (RRQESRK). A helical transmembrane segment spans residues 967–987 (FFVITFLGSIIWIAMFSYLMV). Over 988–1002 (WWAHQVGETIGISEE) the chain is Cytoplasmic. A helical transmembrane segment spans residues 1003-1023 (IMGLTILAAGTSIPDLITSVI). Residues 1010 to 1041 (AAGTSIPDLITSVIVARKGLGDMAVSSSVGSN) form an Alpha-2 repeat. Topologically, residues 1024–1041 (VARKGLGDMAVSSSVGSN) are extracellular. A helical transmembrane segment spans residues 1042–1062 (IFDITVGLPVPWLLFSLINAL). Residues 1063–1070 (QPVPVSSN) are Cytoplasmic-facing. The helical transmembrane segment at 1071-1091 (GLFCAIVLLFLMLLFVIFSIA) threads the bilayer. Residues 1092-1099 (SCKWRMNK) lie on the Extracellular side of the membrane. Residues 1100–1120 (ILGFTMFLLYFVFLVISVMLE) traverse the membrane as a helical segment. Residues 1121-1130 (DRIISCPVSV) lie on the Cytoplasmic side of the membrane.

The protein belongs to the Ca(2+):cation antiporter (CaCA) (TC 2.A.19) family. SLC24A subfamily. The uncleaved signal sequence is required for efficient membrane targeting and proper membrane integration and topology.

Its subcellular location is the cell membrane. The catalysed reaction is Ca(2+)(out) + K(+)(out) + 4 Na(+)(in) = Ca(2+)(in) + K(+)(in) + 4 Na(+)(out). Calcium, potassium:sodium antiporter that transports 1 Ca(2+) and 1 K(+) in exchange for 4 Na(+). Critical component of the visual transduction cascade, controlling the calcium concentration of outer segments during light and darkness. Light causes a rapid lowering of cytosolic free calcium in the outer segment of both retinal rod and cone photoreceptors and the light-induced lowering of calcium is caused by extrusion via this protein which plays a key role in the process of light adaptation. This is Sodium/potassium/calcium exchanger 1 from Mus musculus (Mouse).